Consider the following 194-residue polypeptide: Ion-translocating oxidoreductase complex subunit A (194 aa).

6 consecutive transmembrane segments (helical) span residues 4–24, 39–59, 71–91, 102–122, 131–151, and 172–192; these read LVLIMVSAILVNNFVLVQFLG, IGLSLATTFVLTLAAMCSYLV, FLRTISFILVIAVTVQFTEMV, VLGIFLPLITTNCIVLGVALL, FITATVNGFAAGLGFSLVLVL, and AIGMITAGLMSLAFMGFAGLI.

Belongs to the NqrDE/RnfAE family. The complex is composed of six subunits: RnfA, RnfB, RnfC, RnfD, RnfE and RnfG.

The protein localises to the cell inner membrane. In terms of biological role, part of a membrane-bound complex that couples electron transfer with translocation of ions across the membrane. This Ectopseudomonas mendocina (strain ymp) (Pseudomonas mendocina) protein is Ion-translocating oxidoreductase complex subunit A.